The chain runs to 287 residues: Oxaloacetate decarboxylase (287 aa).

Serine 50 contributes to the substrate binding site. Aspartate 88 is a binding site for Mg(2+). Substrate contacts are provided by arginine 159 and histidine 235.

The protein belongs to the isocitrate lyase/PEP mutase superfamily. Oxaloacetate decarboxylase family. In terms of assembly, homotetramer; dimer of dimers. Mg(2+) is required as a cofactor.

It carries out the reaction oxaloacetate + H(+) = pyruvate + CO2. In terms of biological role, catalyzes the decarboxylation of oxaloacetate into pyruvate. Seems to play a role in maintaining cellular concentrations of bicarbonate and pyruvate. This Marinomonas sp. (strain MWYL1) protein is Oxaloacetate decarboxylase.